Reading from the N-terminus, the 438-residue chain is Cysteine--tRNA ligase (438 aa).

Cys-28 serves as a coordination point for Zn(2+). The 'HIGH' region motif lies at 30 to 40 (PTVYNHLHLGN). Residues Cys-207, His-232, and Glu-236 each coordinate Zn(2+). Positions 264–268 (KMSKS) match the 'KMSKS' region motif. ATP is bound at residue Lys-267.

It belongs to the class-I aminoacyl-tRNA synthetase family. In terms of assembly, monomer. The cofactor is Zn(2+).

Its subcellular location is the cytoplasm. It carries out the reaction tRNA(Cys) + L-cysteine + ATP = L-cysteinyl-tRNA(Cys) + AMP + diphosphate. The polypeptide is Cysteine--tRNA ligase (Onion yellows phytoplasma (strain OY-M)).